The chain runs to 71 residues: R-phycoerythrin gamma-1 chain, chloroplastic (71 aa).

Cys-25 and Cys-34 together coordinate phycourobilin. Cys-49 provides a ligand contact to (2R,3E)-phycoerythrobilin. Cys-58 is a binding site for phycourobilin.

As to quaternary structure, heteromer of 6 alpha, 6 beta and 1 gamma chains. Post-translationally, contains four covalently linked bilin chromophores.

Its subcellular location is the plastid. The protein localises to the chloroplast thylakoid membrane. Functionally, critical for the incorporation of phycoerythrin in the phycobilisome complex. The chain is R-phycoerythrin gamma-1 chain, chloroplastic from Gastroclonium coulteri (Red alga).